Here is a 436-residue protein sequence, read N- to C-terminus: C4-dicarboxylate transport protein 2 (436 aa).

A run of 9 helical transmembrane segments spans residues 14–34 (VLVA…TAVA), 45–65 (LIKM…IAGM), 77–97 (MALL…LVVV), 142–162 (VVGA…VLFG), 198–218 (PIGA…GSLV), 223–243 (LMLC…GGIA), 290–310 (VVGL…SIYL), 331–351 (ITLL…TGSG), and 353–373 (IVLA…LALI). Positions 414–436 (ELAGEGNASSPASDIPVGGREAV) are disordered.

This sequence belongs to the dicarboxylate/amino acid:cation symporter (DAACS) (TC 2.A.23) family.

The protein resides in the cell inner membrane. Functionally, responsible for the transport of dicarboxylates such as succinate, fumarate, and malate from the periplasm across the membrane. This Pseudomonas paraeruginosa (strain DSM 24068 / PA7) (Pseudomonas aeruginosa (strain PA7)) protein is C4-dicarboxylate transport protein 2.